Reading from the N-terminus, the 355-residue chain is 3-isopropylmalate dehydrogenase (355 aa).

Residues Arg98, Arg108, Arg132, and Asp223 each coordinate substrate. 3 residues coordinate Mg(2+): Asp223, Asp247, and Asp251. Position 283–295 (283–295 (GSAPDIAGQQKAD)) interacts with NAD(+).

It belongs to the isocitrate and isopropylmalate dehydrogenases family. LeuB type 2 subfamily. In terms of assembly, homodimer. Mg(2+) serves as cofactor. It depends on Mn(2+) as a cofactor.

The protein localises to the cytoplasm. The enzyme catalyses (2R,3S)-3-isopropylmalate + NAD(+) = 4-methyl-2-oxopentanoate + CO2 + NADH. It participates in amino-acid biosynthesis; L-leucine biosynthesis; L-leucine from 3-methyl-2-oxobutanoate: step 3/4. Its function is as follows. Catalyzes the oxidation of 3-carboxy-2-hydroxy-4-methylpentanoate (3-isopropylmalate) to 3-carboxy-4-methyl-2-oxopentanoate. The product decarboxylates to 4-methyl-2 oxopentanoate. This Clavibacter michiganensis subsp. michiganensis (strain NCPPB 382) protein is 3-isopropylmalate dehydrogenase.